Reading from the N-terminus, the 61-residue chain is Large ribosomal subunit protein uL30 (61 aa).

This sequence belongs to the universal ribosomal protein uL30 family. Part of the 50S ribosomal subunit.

The sequence is that of Large ribosomal subunit protein uL30 from Corynebacterium diphtheriae (strain ATCC 700971 / NCTC 13129 / Biotype gravis).